A 191-amino-acid polypeptide reads, in one-letter code: Small ribosomal subunit protein uS11m (191 aa).

The interval 37 to 62 (PRLEDSAARQNTEREAAPSRFSLYPP) is disordered. Over residues 38-53 (RLEDSAARQNTEREAA) the composition is skewed to basic and acidic residues.

The protein belongs to the universal ribosomal protein uS11 family. Component of the mitochondrial ribosome small subunit (28S) which comprises a 12S rRNA and about 30 distinct proteins.

The protein resides in the mitochondrion. The chain is Small ribosomal subunit protein uS11m (Mrps11) from Mus musculus (Mouse).